Here is a 264-residue protein sequence, read N- to C-terminus: NAD kinase 1 (264 aa).

The Proton acceptor role is filled by aspartate 45. NAD(+)-binding positions include 45–46 (DG), 122–123 (NE), arginine 148, aspartate 150, 161–166 (TAYNKS), and alanine 185.

It belongs to the NAD kinase family. A divalent metal cation serves as cofactor.

Its subcellular location is the cytoplasm. It carries out the reaction NAD(+) + ATP = ADP + NADP(+) + H(+). In terms of biological role, involved in the regulation of the intracellular balance of NAD and NADP, and is a key enzyme in the biosynthesis of NADP. Catalyzes specifically the phosphorylation on 2'-hydroxyl of the adenosine moiety of NAD to yield NADP. In Listeria innocua serovar 6a (strain ATCC BAA-680 / CLIP 11262), this protein is NAD kinase 1.